Reading from the N-terminus, the 421-residue chain is Histidine--tRNA ligase (421 aa).

The protein belongs to the class-II aminoacyl-tRNA synthetase family.

Its subcellular location is the cytoplasm. The enzyme catalyses tRNA(His) + L-histidine + ATP = L-histidyl-tRNA(His) + AMP + diphosphate + H(+). The chain is Histidine--tRNA ligase from Pyrobaculum calidifontis (strain DSM 21063 / JCM 11548 / VA1).